The primary structure comprises 143 residues: Ribosome maturation factor RimP (143 aa).

The protein belongs to the RimP family.

The protein localises to the cytoplasm. Functionally, required for maturation of 30S ribosomal subunits. The chain is Ribosome maturation factor RimP from Nitrosomonas eutropha (strain DSM 101675 / C91 / Nm57).